A 316-amino-acid chain; its full sequence is D-alanine--D-alanine ligase (316 aa).

In terms of domain architecture, ATP-grasp spans 129–316; that stretch reads KYILQAAGIP…ALQAEFCRYP (188 aa). 162 to 217 contacts ATP; it reads EGSLLYPMFIKPANMGSSVGITKAENREELQNALQEAYRYDTRAIVEQGIEAREIE. Mg(2+) is bound by residues D288, E301, and N303.

This sequence belongs to the D-alanine--D-alanine ligase family. Mg(2+) serves as cofactor. The cofactor is Mn(2+).

The protein resides in the cytoplasm. The enzyme catalyses 2 D-alanine + ATP = D-alanyl-D-alanine + ADP + phosphate + H(+). It functions in the pathway cell wall biogenesis; peptidoglycan biosynthesis. Functionally, cell wall formation. In Enterococcus gallinarum, this protein is D-alanine--D-alanine ligase (ddl).